Here is a 101-residue protein sequence, read N- to C-terminus: MLSLAHFLVLGAILFAISIVGIFLNRKNVIVLLMALELLLLAVNMNFVAFSHYMGDLAGQVFVFFILTVAAAESAIGLAILVVLFRNLDTINVDDMDTLKG.

The next 3 membrane-spanning stretches (helical) occupy residues L4 to L24, I30 to F50, and V61 to L81.

The protein belongs to the complex I subunit 4L family. As to quaternary structure, NDH-1 is composed of 14 different subunits. Subunits NuoA, H, J, K, L, M, N constitute the membrane sector of the complex.

It localises to the cell inner membrane. It carries out the reaction a quinone + NADH + 5 H(+)(in) = a quinol + NAD(+) + 4 H(+)(out). Its function is as follows. NDH-1 shuttles electrons from NADH, via FMN and iron-sulfur (Fe-S) centers, to quinones in the respiratory chain. The immediate electron acceptor for the enzyme in this species is believed to be ubiquinone. Couples the redox reaction to proton translocation (for every two electrons transferred, four hydrogen ions are translocated across the cytoplasmic membrane), and thus conserves the redox energy in a proton gradient. The sequence is that of NADH-quinone oxidoreductase subunit K from Cupriavidus metallidurans (strain ATCC 43123 / DSM 2839 / NBRC 102507 / CH34) (Ralstonia metallidurans).